Reading from the N-terminus, the 399-residue chain is Argininosuccinate synthase (399 aa).

8–16 lines the ATP pocket; the sequence is AYSGGLDTT. Tyr87 is an L-citrulline binding site. Gly117 is a binding site for ATP. Residues Thr119, Asn123, and Asp124 each contribute to the L-aspartate site. Asn123 serves as a coordination point for L-citrulline. 4 residues coordinate L-citrulline: Arg127, Ser175, Glu259, and Tyr271.

It belongs to the argininosuccinate synthase family. Type 1 subfamily. As to quaternary structure, homotetramer.

Its subcellular location is the cytoplasm. It carries out the reaction L-citrulline + L-aspartate + ATP = 2-(N(omega)-L-arginino)succinate + AMP + diphosphate + H(+). The protein operates within amino-acid biosynthesis; L-arginine biosynthesis; L-arginine from L-ornithine and carbamoyl phosphate: step 2/3. The polypeptide is Argininosuccinate synthase (Corynebacterium urealyticum (strain ATCC 43042 / DSM 7109)).